The primary structure comprises 804 residues: Ral guanine nucleotide dissociation stimulator-like 1 (804 aa).

Positions 101–231 (KIRSIRAGTL…RAQSLLEQLR (131 aa)) constitute an N-terminal Ras-GEF domain. The Ras-GEF domain maps to 270 to 539 (EVDLVAEQLT…YVLSCEVEGL (270 aa)). Disordered regions lie at residues 564–611 (NDST…TPTH) and 640–676 (SASI…GFPP). 2 stretches are compositionally biased toward low complexity: residues 581–607 (PTGS…SDGM) and 640–649 (SASISLASPT). Residues 661–671 (ISLTPLMSPTS) are compositionally biased toward polar residues. A Ras-associating domain is found at 684–771 (DACIIRVSLE…FDFLLRLRGS (88 aa)).

Its function is as follows. Probable guanine nucleotide exchange factor. This Danio rerio (Zebrafish) protein is Ral guanine nucleotide dissociation stimulator-like 1 (rgl1).